Reading from the N-terminus, the 1455-residue chain is Fanconi anemia group A protein (1455 aa).

A Nuclear localization signal motif is present at residues Arg18 to Lys34. A Phosphoserine modification is found at Ser1449.

As to quaternary structure, belongs to the multisubunit FA complex composed of FANCA, FANCB, FANCC, FANCE, FANCF, FANCG, FANCL/PHF9 and FANCM. The complex is not found in FA patients. In complex with FANCF, FANCG and FANCL, but not with FANCC, nor FANCE, interacts with HES1; this interaction may be essential for the stability and nuclear localization of FA core complex proteins. The complex with FANCC and FANCG may also include EIF2AK2 and HSP70. Interacts with FAAP20/C1orf86; interaction is direct. In terms of processing, phosphorylation is required for the formation of the nuclear complex. Not phosphorylated in cells derived from groups A, B, C, E, F, G, and H.

It is found in the nucleus. Its subcellular location is the cytoplasm. In terms of biological role, DNA repair protein that may operate in a postreplication repair or a cell cycle checkpoint function. May be involved in interstrand DNA cross-link repair and in the maintenance of normal chromosome stability. This chain is Fanconi anemia group A protein (FANCA), found in Homo sapiens (Human).